A 203-amino-acid chain; its full sequence is Tic20 family protein Ycf60 (203 aa).

Transmembrane regions (helical) follow at residues 2–22 (IRLFTFGIITMLVLVIARLAI), 51–71 (IIPYYLPLFEGLQNFGQYVLP), 84–104 (ILLPMLIFYMNHAILGLVTFF), 131–151 (ILLFLVGSLFGAIFRAFPIEF), and 153–173 (ISFIGLTVCNMMFWFILSTIT).

The protein belongs to the Tic20 family.

The protein resides in the plastid. It localises to the chloroplast membrane. This is Tic20 family protein Ycf60 (ycf60) from Porphyra purpurea (Red seaweed).